We begin with the raw amino-acid sequence, 404 residues long: MELRVSNTSCENGSLLHLYCSSQEVLCQIVNDLSPEVPSNATFHSWQERIRQNYGFYIGLGLAFLSSFLIGSSVILKKKGLLRLVATGATRAVDGGFGYLKDAMWWAGFLTMAAGEVANFGAYAFAPATVVTPLGALSVLISAILSSYFLRESLNLLGKLGCVICVAGSTVMVIHAPEEEKVTTIMEMASKMKDTGFIVFAVLLLVSCLILIFVIAPRYGQRNILIYIIICSVIGAFSVAAVKGLGITIKNFFQGLPVVRHPLPYILSLILALSLSTQVNFLNRALDIFNTSLVFPIYYVFFTTVVVTSSIILFKEWYSMSAVDIAGTLSGFVTIILGVFMLHAFKDLDISCASLPHMHKNPPPSPAPEPTVIRLEDKNVLVDNIELASTSSPEEKPKVFIIHS.

The Extracellular portion of the chain corresponds to 1–55 (MELRVSNTSCENGSLLHLYCSSQEVLCQIVNDLSPEVPSNATFHSWQERIRQNYG). N-linked (GlcNAc...) asparagine glycosylation is found at Asn-7, Asn-12, and Asn-40. Residues 56 to 76 (FYIGLGLAFLSSFLIGSSVIL) traverse the membrane as a helical segment. Over 77–102 (KKKGLLRLVATGATRAVDGGFGYLKD) the chain is Cytoplasmic. The chain crosses the membrane as a helical span at residues 103–123 (AMWWAGFLTMAAGEVANFGAY). Ala-124 is a topological domain (extracellular). Residues 125–145 (FAPATVVTPLGALSVLISAIL) form a helical membrane-spanning segment. Topologically, residues 146 to 153 (SSYFLRES) are cytoplasmic. The helical transmembrane segment at 154 to 174 (LNLLGKLGCVICVAGSTVMVI) threads the bilayer. The Extracellular segment spans residues 175–195 (HAPEEEKVTTIMEMASKMKDT). A helical membrane pass occupies residues 196–216 (GFIVFAVLLLVSCLILIFVIA). The Cytoplasmic portion of the chain corresponds to 217-223 (PRYGQRN). A helical transmembrane segment spans residues 224–244 (ILIYIIICSVIGAFSVAAVKG). At 245 to 261 (LGITIKNFFQGLPVVRH) the chain is on the extracellular side. The helical transmembrane segment at 262–282 (PLPYILSLILALSLSTQVNFL) threads the bilayer. Residues 283–293 (NRALDIFNTSL) lie on the Cytoplasmic side of the membrane. The helical transmembrane segment at 294–314 (VFPIYYVFFTTVVVTSSIILF) threads the bilayer. Topologically, residues 315 to 324 (KEWYSMSAVD) are extracellular. A helical membrane pass occupies residues 325–345 (IAGTLSGFVTIILGVFMLHAF). Over 346–404 (KDLDISCASLPHMHKNPPPSPAPEPTVIRLEDKNVLVDNIELASTSSPEEKPKVFIIHS) the chain is Cytoplasmic.

Belongs to the NIPA family. As to expression, highly expressed in brain, lung, stomach, keratinocytes and leukocytes, and in all other tissues tested except liver, thyroid and fetal brain.

The protein resides in the cell membrane. It carries out the reaction Mg(2+)(in) = Mg(2+)(out). Functionally, acts as a Mg(2+) transporter. Can also transport other divalent cations such as Ba(2+), Sr(2+) and Fe(2+) but to a much less extent than Mg(2+). May be a receptor for ligands (trioxilins A3 and B3) from the hepoxilin pathway. The protein is Magnesium transporter NIPA4 (NIPAL4) of Homo sapiens (Human).